The chain runs to 295 residues: 3-methyl-2-oxobutanoate hydroxymethyltransferase (295 aa).

The segment at 1–30 (MTSGRAMSPEETAPYGTGPARAESAPDAPA) is disordered. Residues D76 and D115 each contribute to the Mg(2+) site. 3-methyl-2-oxobutanoate contacts are provided by residues 76–77 (DS), D115, and K145. E147 contacts Mg(2+). E213 (proton acceptor) is an active-site residue.

Belongs to the PanB family. Homodecamer; pentamer of dimers. Requires Mg(2+) as cofactor.

Its subcellular location is the cytoplasm. It catalyses the reaction 3-methyl-2-oxobutanoate + (6R)-5,10-methylene-5,6,7,8-tetrahydrofolate + H2O = 2-dehydropantoate + (6S)-5,6,7,8-tetrahydrofolate. The protein operates within cofactor biosynthesis; (R)-pantothenate biosynthesis; (R)-pantoate from 3-methyl-2-oxobutanoate: step 1/2. Catalyzes the reversible reaction in which hydroxymethyl group from 5,10-methylenetetrahydrofolate is transferred onto alpha-ketoisovalerate to form ketopantoate. In Nocardioides sp. (strain ATCC BAA-499 / JS614), this protein is 3-methyl-2-oxobutanoate hydroxymethyltransferase.